Reading from the N-terminus, the 202-residue chain is Probable GTP-binding protein EngB (202 aa).

The EngB-type G domain maps to 30–201 (NILQIALAGR…WERIQYTIDS (172 aa)). GTP is bound by residues 38–45 (GRSNVGKS), 65–69 (GKTRS), 84–87 (DLPG), 151–154 (TKID), and 180–182 (VSS). Ser45 and Thr67 together coordinate Mg(2+).

It belongs to the TRAFAC class TrmE-Era-EngA-EngB-Septin-like GTPase superfamily. EngB GTPase family. Mg(2+) serves as cofactor.

Necessary for normal cell division and for the maintenance of normal septation. This Lawsonia intracellularis (strain PHE/MN1-00) protein is Probable GTP-binding protein EngB.